Reading from the N-terminus, the 291-residue chain is Hydroxysteroid 11-beta-dehydrogenase 1-like protein A (291 aa).

The N-terminal stretch at methionine 1 to tyrosine 18 is a signal peptide. NADP(+)-binding positions include glycine 40–arginine 66, aspartate 91–methionine 92, and asparagine 118–isoleucine 120. Serine 170 serves as a coordination point for substrate. The Proton acceptor role is filled by tyrosine 183. NADP(+) is bound by residues tyrosine 183 to lysine 187 and glycine 216 to asparagine 222.

It belongs to the short-chain dehydrogenases/reductases (SDR) family.

Its subcellular location is the secreted. It catalyses the reaction cortisone + NADPH + H(+) = cortisol + NADP(+). Unidirectional NADP(+)-dependent cortisol dehydrogenase (in vitro). The protein is Hydroxysteroid 11-beta-dehydrogenase 1-like protein A (hsd11b1l-a) of Xenopus laevis (African clawed frog).